The sequence spans 247 residues: EGF-like domain-containing protein C02B10.3 (247 aa).

Positions 1-17 are cleaved as a signal peptide; sequence MTGALCIVLFGVTMVTA. Residues 18-220 are Extracellular-facing; it reads ERPKIKDTHG…LCDKRCQKGH (203 aa). 2 EGF-like domains span residues 114–150 and 180–213; these read FGTS…RFCE and SGAS…DLCD. Disulfide bonds link cysteine 123/cysteine 138, cysteine 140/cysteine 149, cysteine 190/cysteine 201, and cysteine 203/cysteine 212. Asparagine 126 carries N-linked (GlcNAc...) asparagine glycosylation. A helical transmembrane segment spans residues 221–240; that stretch reads VTCSTCSSFIPAALFAIILL. At 241 to 247 the chain is on the cytoplasmic side; it reads CVNKFNY.

Its subcellular location is the membrane. The chain is EGF-like domain-containing protein C02B10.3 from Caenorhabditis elegans.